We begin with the raw amino-acid sequence, 319 residues long: Cytochrome f (319 aa).

The signal sequence occupies residues methionine 1 to alanine 35. Residues tyrosine 36, cysteine 56, cysteine 59, and histidine 60 each coordinate heme. A helical transmembrane segment spans residues isoleucine 285–lysine 305.

Belongs to the cytochrome f family. The 4 large subunits of the cytochrome b6-f complex are cytochrome b6, subunit IV (17 kDa polypeptide, petD), cytochrome f and the Rieske protein, while the 4 small subunits are PetG, PetL, PetM and PetN. The complex functions as a dimer. It depends on heme as a cofactor.

Its subcellular location is the plastid. It localises to the chloroplast thylakoid membrane. Component of the cytochrome b6-f complex, which mediates electron transfer between photosystem II (PSII) and photosystem I (PSI), cyclic electron flow around PSI, and state transitions. The protein is Cytochrome f of Chlorokybus atmophyticus (Soil alga).